Reading from the N-terminus, the 394-residue chain is ORC1-type DNA replication protein 3 (394 aa).

Residues 66–70 (TGKTF) and Tyr-207 each bind ATP.

Belongs to the CDC6/cdc18 family. As to quaternary structure, monomer. Interacts with Cdc6-1, Cdc6-2, MCM and PolB1.

In terms of biological role, involved in regulation of DNA replication. May play essential roles in origin recognition and cell cycle control of replication. Binds to DNA, with a preference for molecules that contain a bubble, a fork, or a tail. Inhibits the binding of the MCM helicase to the origin DNA and inhibits its DNA helicase activity. Also regulates the DNA polymerase and the nuclease activities of PolB1. Inhibits the DNA-binding activity of Cdc6-1 and Cdc6-2. The polypeptide is ORC1-type DNA replication protein 3 (cdc6-3) (Saccharolobus solfataricus (strain ATCC 35092 / DSM 1617 / JCM 11322 / P2) (Sulfolobus solfataricus)).